We begin with the raw amino-acid sequence, 400 residues long: 2-octaprenylphenol hydroxylase (400 aa).

FAD-binding positions include 49–52 and 297–303; these read RVSA and LAGQGVN.

This sequence belongs to the UbiH/COQ6 family. Homotetramer. Component of the Ubi complex metabolon, which regroups five ubiquinone biosynthesis proteins (UbiE, UbiF, UbiG, UbiH and UbiI) and two accessory factors (UbiK and the lipid-binding protein UbiJ). Requires FAD as cofactor.

The protein resides in the cytoplasm. The enzyme catalyses 2-all-trans-octaprenylphenol + NADPH + O2 + H(+) = 3-(all-trans-octaprenyl)benzene-1,2-diol + NADP(+) + H2O. It catalyses the reaction a 2-(all-trans-polyprenyl)phenol + NADPH + O2 + H(+) = a 3-(all-trans-polyprenyl)benzene-1,2-diol + NADP(+) + H2O. It functions in the pathway cofactor biosynthesis; ubiquinone biosynthesis. Functionally, FAD-dependent monooxygenase required for the aerobic hydroxylation of 2-octaprenylphenol to 2-octaprenyl-6-hydroxy-phenol, the first hydroxylation step in coenzyme Q (ubiquinone) biosynthesis. This is 2-octaprenylphenol hydroxylase from Escherichia coli (strain K12).